The chain runs to 257 residues: MDVRGIFGVKVGMSQIFTEQNECLPITIVYCEANQVAGIKTIAKDNYNATLLSFQTVDEKQLNKPKQGFFSKLKLEPHKYLREIRKMQGFELGKKITPQELFKIGEYVDVTSLTKGRGFTGAIKRWNFKIGPLGHGAGYPHRFQGSVQAGRGGSSAQRVFKGKKMSGHYGHEQVTIQNLFIVGFDEINKLVLVSGAIAGPEGGIVLIKTAKKKTGKIKDIKLAVQTVKAPQLKAPKKQKTKVETNQVNPKIEEEKTK.

The tract at residues 232–257 (LKAPKKQKTKVETNQVNPKIEEEKTK) is disordered.

It belongs to the universal ribosomal protein uL3 family. In terms of assembly, part of the 50S ribosomal subunit. Forms a cluster with proteins L14 and L19.

One of the primary rRNA binding proteins, it binds directly near the 3'-end of the 23S rRNA, where it nucleates assembly of the 50S subunit. In Mycoplasma genitalium (strain ATCC 33530 / DSM 19775 / NCTC 10195 / G37) (Mycoplasmoides genitalium), this protein is Large ribosomal subunit protein uL3.